The primary structure comprises 1440 residues: ABC transporter G family member 46 (1440 aa).

The segment at 1 to 42 (MDDDVDAGEIYAVDRQREEGSASAAAFSRSPSTGRVDDDDDD) is disordered. The span at 21–32 (SASAAAFSRSPS) shows a compositional bias: low complexity. Positions 137–419 (ANTLHMTTRS…FKSLGFKCLE (283 aa)) constitute an ABC transporter 1 domain. An ATP-binding site is contributed by 170–177 (GSPGSGKT). Residues 497–710 (KILKANIDRE…ALNALAVNEF (214 aa)) form the ABC transmembrane type-2 1 domain. A run of 7 helical transmembrane segments spans residues 516-536 (LYIF…SVFI), 561-581 (AIMF…PVFF), 603-623 (TPIS…VIGF), 634-654 (FLVL…IAAL), 659-679 (VVAS…SGFI), 688-708 (WLIW…LAVN), and 745-765 (IGLG…TICL). Residues 794–829 (DQEPSSGGRVTNDKRYTEGGNNDEATSSNANHNSSP) are disordered. A compositionally biased stretch (polar residues) spans 812 to 829 (GGNNDEATSSNANHNSSP). Positions 843-1095 (MTFEDIRYSI…ELIKYFESIE (253 aa)) constitute an ABC transporter 2 domain. 888-895 (GISGAGKT) provides a ligand contact to ATP. An ABC transmembrane type-2 2 domain is found at 1168–1382 (IQCLACLWKQ…TINGLVTSQF (215 aa)). 7 consecutive transmembrane segments (helical) span residues 1188-1208 (IAVN…MFWG), 1219-1236 (LLSA…LGVQ), 1271-1291 (VVVE…IVYS), 1302-1322 (FFWY…YGMM), 1332-1352 (MSSI…GFLI), 1357-1377 (IPIW…INGL), and 1410-1430 (LWVA…LFGF).

This sequence belongs to the ABC transporter superfamily. ABCG family. PDR (TC 3.A.1.205) subfamily.

The protein localises to the membrane. May be a general defense protein. This chain is ABC transporter G family member 46, found in Oryza sativa subsp. japonica (Rice).